The chain runs to 536 residues: Phosphoenolpyruvate carboxykinase (ATP) (536 aa).

Substrate contacts are provided by arginine 61, tyrosine 195, and lysine 201. ATP-binding positions include lysine 201, histidine 220, and 236–244 (GLSGTGKTT). Mn(2+) is bound by residues lysine 201 and histidine 220. Aspartate 257 contacts Mn(2+). Residues glutamate 285, arginine 323, and threonine 448 each coordinate ATP. Arginine 323 contributes to the substrate binding site.

The protein belongs to the phosphoenolpyruvate carboxykinase (ATP) family. It depends on Mn(2+) as a cofactor.

It is found in the cytoplasm. It catalyses the reaction oxaloacetate + ATP = phosphoenolpyruvate + ADP + CO2. It functions in the pathway carbohydrate biosynthesis; gluconeogenesis. In terms of biological role, involved in the gluconeogenesis. Catalyzes the conversion of oxaloacetate (OAA) to phosphoenolpyruvate (PEP) through direct phosphoryl transfer between the nucleoside triphosphate and OAA. This chain is Phosphoenolpyruvate carboxykinase (ATP), found in Methylobacterium sp. (strain 4-46).